We begin with the raw amino-acid sequence, 306 residues long: Putative syntaxin-3 (306 aa).

The Cytoplasmic portion of the chain corresponds to 1-279 (MPRDRLKELQ…QKRARKMKVC (279 aa)). The interval 40-180 (QDADFEMFLE…QLSDEEIENA (141 aa)) is required for the regulation of the defecation motor program. A t-SNARE coiled-coil homology domain is found at 204–266 (YDEVKSRADE…KQARGNVEEA (63 aa)). The chain crosses the membrane as a helical; Anchor for type IV membrane protein span at residues 280-300 (IIIGSIIAVLILILFIQSAVC). The Extracellular portion of the chain corresponds to 301–306 (HFTPIC).

It belongs to the syntaxin family. As to expression, expressed in body wall, pharyngeal, vulval and enteric muscles and in some head neurons.

Its subcellular location is the cell membrane. Functionally, potentially involved in docking of synaptic vesicles at presynaptic active zones. Acts in the intestine to regulate anterior body muscle contractions (aBOC) and the expulsion steps during the defecation motor program (DMP). This is Putative syntaxin-3 from Caenorhabditis elegans.